The sequence spans 163 residues: Lysosomal enzyme trafficking factor (163 aa).

The next 2 membrane-spanning stretches (helical) occupy residues Met40 to Phe60 and Leu98 to Leu118.

It belongs to the LYSET family. Interacts with GNPTAB; this interaction is important for proper localization of GNPTAB in Golgi stacks. Interacts with MBTPS1.

Its subcellular location is the golgi apparatus membrane. Required for mannose-6-phosphate-dependent trafficking of lysosomal enzymes. LYSET bridges GlcNAc-1-phosphate transferase (GNPTAB), to the membrane-bound transcription factor site-1 protease (MBTPS1), thus allowing proteolytic activation of the GNPTAB. GNPTAB is involved in the regulation of M6P-dependent Golgi-to-lysosome trafficking of lysosomal enzymes. LYSET is thus an essential factor for maturation and delivery of lysosomal hydrolases. Functionally, (Microbial infection) Essential for infection by muliple viruses, including SARS-CoV-2, that utilize activated cathepsins for entry after M6P-dependent lysosomal transport. The polypeptide is Lysosomal enzyme trafficking factor (Homo sapiens (Human)).